A 311-amino-acid polypeptide reads, in one-letter code: 4-hydroxy-3-methylbut-2-enyl diphosphate reductase (311 aa).

Cys-12 is a [4Fe-4S] cluster binding site. Positions 41 and 74 each coordinate (2E)-4-hydroxy-3-methylbut-2-enyl diphosphate. Dimethylallyl diphosphate is bound by residues His-41 and His-74. Residues His-41 and His-74 each coordinate isopentenyl diphosphate. Cys-96 is a binding site for [4Fe-4S] cluster. (2E)-4-hydroxy-3-methylbut-2-enyl diphosphate is bound at residue His-124. His-124 contributes to the dimethylallyl diphosphate binding site. His-124 is a binding site for isopentenyl diphosphate. Residue Glu-126 is the Proton donor of the active site. Thr-168 contributes to the (2E)-4-hydroxy-3-methylbut-2-enyl diphosphate binding site. Cys-198 is a [4Fe-4S] cluster binding site. (2E)-4-hydroxy-3-methylbut-2-enyl diphosphate contacts are provided by Ser-226, Ser-227, Asn-228, and Ser-270. Dimethylallyl diphosphate contacts are provided by Ser-226, Ser-227, Asn-228, and Ser-270. Isopentenyl diphosphate is bound by residues Ser-226, Ser-227, Asn-228, and Ser-270.

It belongs to the IspH family. [4Fe-4S] cluster serves as cofactor.

It catalyses the reaction isopentenyl diphosphate + 2 oxidized [2Fe-2S]-[ferredoxin] + H2O = (2E)-4-hydroxy-3-methylbut-2-enyl diphosphate + 2 reduced [2Fe-2S]-[ferredoxin] + 2 H(+). The catalysed reaction is dimethylallyl diphosphate + 2 oxidized [2Fe-2S]-[ferredoxin] + H2O = (2E)-4-hydroxy-3-methylbut-2-enyl diphosphate + 2 reduced [2Fe-2S]-[ferredoxin] + 2 H(+). Its pathway is isoprenoid biosynthesis; dimethylallyl diphosphate biosynthesis; dimethylallyl diphosphate from (2E)-4-hydroxy-3-methylbutenyl diphosphate: step 1/1. It participates in isoprenoid biosynthesis; isopentenyl diphosphate biosynthesis via DXP pathway; isopentenyl diphosphate from 1-deoxy-D-xylulose 5-phosphate: step 6/6. Its function is as follows. Catalyzes the conversion of 1-hydroxy-2-methyl-2-(E)-butenyl 4-diphosphate (HMBPP) into a mixture of isopentenyl diphosphate (IPP) and dimethylallyl diphosphate (DMAPP). Acts in the terminal step of the DOXP/MEP pathway for isoprenoid precursor biosynthesis. This chain is 4-hydroxy-3-methylbut-2-enyl diphosphate reductase, found in Saccharophagus degradans (strain 2-40 / ATCC 43961 / DSM 17024).